Reading from the N-terminus, the 236-residue chain is Glucosamine-6-phosphate deaminase (236 aa).

The active-site Proton acceptor; for enolization step is the Asp67. The For ring-opening step role is filled by Asn136. His138 serves as the catalytic Proton acceptor; for ring-opening step. Glu143 (for ring-opening step) is an active-site residue.

This sequence belongs to the glucosamine/galactosamine-6-phosphate isomerase family. NagB subfamily.

The enzyme catalyses alpha-D-glucosamine 6-phosphate + H2O = beta-D-fructose 6-phosphate + NH4(+). The protein operates within amino-sugar metabolism; N-acetylneuraminate degradation; D-fructose 6-phosphate from N-acetylneuraminate: step 5/5. In terms of biological role, catalyzes the reversible isomerization-deamination of glucosamine 6-phosphate (GlcN6P) to form fructose 6-phosphate (Fru6P) and ammonium ion. The chain is Glucosamine-6-phosphate deaminase from Lachnoclostridium phytofermentans (strain ATCC 700394 / DSM 18823 / ISDg) (Clostridium phytofermentans).